We begin with the raw amino-acid sequence, 218 residues long: MLSYIKRKLSESDSGVSSVATVTSSCGGDSGRAGGTGSSESGTGSSSASISGRSQNADELVRKTSQMSMDDEAIAFGEDALLHELGYKNQTELQETIYDLLRGIRDPEKPCTLEDLNVVYEDGIFVMPPTRSNVSVVRIEFNPTVPHCSLATLIGLCIRVKVERGLPHNIKLDIYIKKGAHQTEEEINKQINDKERIAAAMENPNLRDLVENCIKDEE.

A disordered region spans residues 1-59; sequence MLSYIKRKLSESDSGVSSVATVTSSCGGDSGRAGGTGSSESGTGSSSASISGRSQNADE. Positions 12 to 27 are enriched in low complexity; the sequence is SDSGVSSVATVTSSCG. Phosphoserine is present on serine 14. Gly residues predominate over residues 28 to 37; sequence GDSGRAGGTG. The segment covering 38–54 has biased composition (low complexity); sequence SSESGTGSSSASISGRS. Serine 65 carries the phosphoserine modification.

This sequence belongs to the MIP18 family. As to quaternary structure, component of the CGX complex composed of crb, galla (galla-1 or galla-2) and Xpd. Interacts with crb (via intracellular domain). Is not able to interact with Xpd in the absence of crb.

Its subcellular location is the apical cell membrane. It localises to the cytoplasm. It is found in the cytoskeleton. The protein resides in the spindle. In terms of biological role, component of the crb-galla-Xpd (CGX) complex which is essential for proper mitotic chromosome segregation in early embryos. The CGX complex is also required for cell proliferation in developing wing disks. In the CGX complex, acts with crb to recruit Xpd thus forming the functional complex. In Drosophila melanogaster (Fruit fly), this protein is MIP18 family protein galla-1.